The primary structure comprises 752 residues: Glutamate carboxypeptidase 2 (752 aa).

Over 1 to 22 (MWNALQDRDSAEVLGHRQRWLR) the chain is Cytoplasmic. At Ser10 the chain carries Phosphoserine. A helical; Signal-anchor for type II membrane protein transmembrane segment spans residues 23–44 (VGTLVLALTGTFLIGFLFGWFI). The Extracellular portion of the chain corresponds to 45-752 (KPSNEATGNV…AAAETLREVA (708 aa)). N-linked (GlcNAc...) asparagine glycans are attached at residues Asn78, Asn123, and Asn155. Substrate contacts are provided by Arg212 and Asn259. The Ca(2+) site is built by Thr271 and Tyr274. The tract at residues 276 to 589 (ANEHAYRHEL…QVRGAMVFEL (314 aa)) is NAALADase. Asn338 carries an N-linked (GlcNAc...) asparagine glycan. His379 and Asp389 together coordinate Zn(2+). Glu426 is a substrate binding site. Glu426 acts as the Nucleophile; for NAALADase activity in catalysis. Glu427 serves as a coordination point for Zn(2+). 2 residues coordinate Ca(2+): Glu435 and Glu438. Asp455 serves as a coordination point for Zn(2+). Residues Asn461 and Asn478 are each glycosylated (N-linked (GlcNAc...) asparagine). Residues 519-520 (SG), Asn521, 536-538 (RAR), Tyr554, and 554-555 (YH) each bind substrate. A Zn(2+)-binding site is contributed by His555. N-linked (GlcNAc...) asparagine glycosylation is present at Asn615. Ser630 serves as the catalytic Charge relay system. N-linked (GlcNAc...) asparagine glycosylation is present at Asn640. Active-site charge relay system residues include Asp668 and His691. Position 701–702 (701–702 (KY)) interacts with substrate. Residue Asn722 is glycosylated (N-linked (GlcNAc...) asparagine).

This sequence belongs to the peptidase M28 family. M28B subfamily. Homodimer. The cofactor is Zn(2+). Expressed predominantly in the hippocampal region of the brain and in kidney. Lower levels in the ovary, testis and mandibular gland.

Its subcellular location is the cell membrane. The catalysed reaction is Release of an unsubstituted, C-terminal glutamyl residue, typically from Ac-Asp-Glu or folylpoly-gamma-glutamates.. The NAALADase and folate hydrolase activities are inhibited by quisqualic acid. Its function is as follows. Has both folate hydrolase and N-acetylated-alpha-linked-acidic dipeptidase (NAALADase) activity. Has a preference for tri-alpha-glutamate peptides. In the intestine, required for the uptake of folate. In the brain, modulates excitatory neurotransmission through the hydrolysis of the neuropeptide, N-aceylaspartylglutamate (NAAG), thereby releasing glutamate. Functionally, also exhibits a dipeptidyl-peptidase IV type activity. In vitro, cleaves Gly-Pro-AMC. The polypeptide is Glutamate carboxypeptidase 2 (Folh1) (Mus musculus (Mouse)).